A 501-amino-acid chain; its full sequence is Glycerol kinase (501 aa).

Thr16 contacts ADP. ATP contacts are provided by Thr16, Thr17, and Ser18. Thr16 lines the sn-glycerol 3-phosphate pocket. Arg20 contributes to the ADP binding site. Residues Arg84, Glu85, Tyr135, and Asp242 each coordinate sn-glycerol 3-phosphate. Glycerol contacts are provided by Arg84, Glu85, Tyr135, Asp242, and Gln243. ADP contacts are provided by Thr264 and Gly307. Thr264, Gly307, Gln311, and Gly408 together coordinate ATP. Gly408 serves as a coordination point for ADP.

The protein belongs to the FGGY kinase family.

It carries out the reaction glycerol + ATP = sn-glycerol 3-phosphate + ADP + H(+). It functions in the pathway polyol metabolism; glycerol degradation via glycerol kinase pathway; sn-glycerol 3-phosphate from glycerol: step 1/1. Key enzyme in the regulation of glycerol uptake and metabolism. Catalyzes the phosphorylation of glycerol to yield sn-glycerol 3-phosphate. In Saccharolobus islandicus (strain M.16.27) (Sulfolobus islandicus), this protein is Glycerol kinase.